The chain runs to 293 residues: 33 kDa chaperonin (293 aa).

2 disulfides stabilise this stretch: C238–C240 and C271–C274.

The protein belongs to the HSP33 family. Post-translationally, under oxidizing conditions two disulfide bonds are formed involving the reactive cysteines. Under reducing conditions zinc is bound to the reactive cysteines and the protein is inactive.

Its subcellular location is the cytoplasm. In terms of biological role, redox regulated molecular chaperone. Protects both thermally unfolding and oxidatively damaged proteins from irreversible aggregation. Plays an important role in the bacterial defense system toward oxidative stress. This Staphylococcus aureus (strain Mu3 / ATCC 700698) protein is 33 kDa chaperonin.